The chain runs to 434 residues: MAMQKIFAREILDSRGNPTVEVDLHTAKGRFRAAVPSGASTGIYEALELRDGDKSRYLGKGVLKAVEHINKTLGPALLEKKLSVVDQEKVDKFMIELDGTENKSKFGANAILGVSLAVCKAGAAEKGVPLYRHIADLAGNPDLVLPVPAFNVINGGSHAGNKLAMQEFMILPVGASSFKEAMRIGAEVYHHLKGVIKAKYGKDATNVGDEGGFAPNILENNEALELLKTAIQAAGYPDKVVIGMDVAASEFYRNGKYDLDFKSPDDPARHISGEKLGELYKSFIKNYPVVSIEDPFDQDDWATWTSFLSGVDIQIVGDDLTVTNPKRIAQAVEKKACNCLLLKVNQIGSVTESIQACKLAQSNGWGVMVSHRSGETEDTFIADLVVGLCTGQIKTGAPCRSERLAKYNQLMRIEEALGDKAVFAGRKFRNPKAK.

Residue A2 is modified to N-acetylalanine. T72 is modified (phosphothreonine). Phosphoserine occurs at positions 83 and 157. Substrate is bound by residues H158 and E167. S176 carries the phosphoserine modification. A Phosphothreonine modification is found at T205. E210 serves as the catalytic Proton donor. T229 carries the post-translational modification Phosphothreonine. A Phosphotyrosine modification is found at Y236. D245 is a Mg(2+) binding site. Position 263 is a phosphoserine (S263). Residues E293 and D318 each contribute to the substrate site. Mg(2+) is bound by residues E293 and D318. K343 functions as the Proton acceptor in the catalytic mechanism. Residues 370-373 (SHRS) and K394 each bind substrate.

The protein belongs to the enolase family. Mammalian enolase is composed of 3 isozyme subunits, alpha, beta and gamma, which can form homodimers or heterodimers which are cell-type and development-specific. Interacts with PNKD. It depends on Mg(2+) as a cofactor. As to expression, the alpha/alpha homodimer is expressed in embryo and in most adult tissues. The alpha/beta heterodimer and the beta/beta homodimer are found in striated muscle, and the alpha/gamma heterodimer and the gamma/gamma homodimer in neurons.

It localises to the cytoplasm. The catalysed reaction is (2R)-2-phosphoglycerate = phosphoenolpyruvate + H2O. It participates in carbohydrate degradation; glycolysis; pyruvate from D-glyceraldehyde 3-phosphate: step 4/5. Functionally, glycolytic enzyme that catalyzes the conversion of 2-phosphoglycerate to phosphoenolpyruvate. Appears to have a function in striated muscle development and regeneration. The protein is Beta-enolase (Eno3) of Rattus norvegicus (Rat).